Reading from the N-terminus, the 76-residue chain is Transcription modulator YdgT (76 aa).

The protein belongs to the Hha/YmoA/Cnu family.

Functionally, binds to H-NS and modifies the range of genes it silences; H-NS alone silences 'core' genes while the H-NS-Hha complex (and presumably also H-NS-YdgT) silences genes acquired by horizontal gene transfer. Plays a role silencing virulence factors in the absence of factors that induce pathogenicity. The sequence is that of Transcription modulator YdgT (ydgT) from Salmonella typhimurium (strain SL1344).